The chain runs to 1031 residues: Putative protein TIC 214 N-terminal part (1031 aa).

Helical transmembrane passes span 11-31 (ILWA…LFGL), 68-88 (TLGQ…IMLL), 92-112 (AITL…KDLS), 127-147 (GIIQ…ILLP), 166-186 (SFFV…LINL), and 212-232 (TFSI…PVPF).

Belongs to the TIC214 family. In terms of assembly, part of the Tic complex.

It is found in the plastid. It localises to the chloroplast inner membrane. Functionally, involved in protein precursor import into chloroplasts. May be part of an intermediate translocation complex acting as a protein-conducting channel at the inner envelope. The polypeptide is Putative protein TIC 214 N-terminal part (Anthoceros angustus (Hornwort)).